A 411-amino-acid chain; its full sequence is Phosphopentomutase (411 aa).

Mn(2+) is bound by residues Asp14, Asp306, His311, Asp347, His348, and His359.

It belongs to the phosphopentomutase family. Mn(2+) is required as a cofactor.

It localises to the cytoplasm. It carries out the reaction 2-deoxy-alpha-D-ribose 1-phosphate = 2-deoxy-D-ribose 5-phosphate. The enzyme catalyses alpha-D-ribose 1-phosphate = D-ribose 5-phosphate. It participates in carbohydrate degradation; 2-deoxy-D-ribose 1-phosphate degradation; D-glyceraldehyde 3-phosphate and acetaldehyde from 2-deoxy-alpha-D-ribose 1-phosphate: step 1/2. Isomerase that catalyzes the conversion of deoxy-ribose 1-phosphate (dRib-1-P) and ribose 1-phosphate (Rib-1-P) to deoxy-ribose 5-phosphate (dRib-5-P) and ribose 5-phosphate (Rib-5-P), respectively. In Lactococcus lactis subsp. lactis (strain IL1403) (Streptococcus lactis), this protein is Phosphopentomutase.